Consider the following 48-residue polypeptide: uncharacterized protein (48 aa).

The disordered stretch occupies residues 1 to 48 (MVREKKNPSSAAVSAASVKGDAGPTQHYGGGKRTSQNQQYKKHNMGQS). Over residues 9–18 (SSAAVSAASV) the composition is skewed to low complexity.

This is an uncharacterized protein from Bacillus subtilis (strain 168).